The sequence spans 712 residues: Probable GTP diphosphokinase RSH3, chloroplastic (712 aa).

Residues 1 to 64 constitute a chloroplast transit peptide; the sequence is MVVATTIALY…LLFSGASVKS (64 aa). Residues 65–74 are compositionally biased toward low complexity; that stretch reads SSSSSSSHPS. Residues 65 to 84 are disordered; that stretch reads SSSSSSSHPSVGEELASIRH. One can recognise an HD domain in the interval 237–338; the sequence is YLQHCVETAM…IKLADRLHNM (102 aa).

This sequence belongs to the RelA/SpoT family.

Its subcellular location is the plastid. The protein resides in the chloroplast. It catalyses the reaction GTP + ATP = guanosine 3'-diphosphate 5'-triphosphate + AMP. Functionally, probable ppGpp (guanosine 3'-diphosphate 5'-diphosphate) synthetase that may be involved in a rapid plant ppGpp-mediated response to pathogens and other stresses. The protein is Probable GTP diphosphokinase RSH3, chloroplastic (RSH3) of Arabidopsis thaliana (Mouse-ear cress).